Consider the following 106-residue polypeptide: uncharacterized protein (106 aa).

A run of 2 helical transmembrane segments spans residues 17–37 and 55–75; these read AGLLMTISLAKSFSFAIAVLV and FSSSYVFLYFIVICRLRFMIF.

Its subcellular location is the membrane. This is an uncharacterized protein from Saccharomyces cerevisiae (strain ATCC 204508 / S288c) (Baker's yeast).